A 752-amino-acid polypeptide reads, in one-letter code: DNA topoisomerase 4 subunit A (752 aa).

Residues 31-494 (LPFIGDGLKP…EAKAMSEHDM (464 aa)) form the Topo IIA-type catalytic domain. Catalysis depends on Tyr-120, which acts as the O-(5'-phospho-DNA)-tyrosine intermediate. Residues 472-492 (YGDDRRSPLREREEAKAMSEH) form a disordered region. The span at 473–492 (GDDRRSPLREREEAKAMSEH) shows a compositional bias: basic and acidic residues.

The protein belongs to the type II topoisomerase GyrA/ParC subunit family. ParC type 1 subfamily. As to quaternary structure, heterotetramer composed of ParC and ParE.

Its subcellular location is the cell membrane. It carries out the reaction ATP-dependent breakage, passage and rejoining of double-stranded DNA.. In terms of biological role, topoisomerase IV is essential for chromosome segregation. It relaxes supercoiled DNA. Performs the decatenation events required during the replication of a circular DNA molecule. In Salmonella typhimurium (strain LT2 / SGSC1412 / ATCC 700720), this protein is DNA topoisomerase 4 subunit A.